The chain runs to 357 residues: DNA replication and repair protein RecF (357 aa).

ATP is bound at residue 30-37 (GANGSGKT).

Belongs to the RecF family.

It localises to the cytoplasm. The RecF protein is involved in DNA metabolism; it is required for DNA replication and normal SOS inducibility. RecF binds preferentially to single-stranded, linear DNA. It also seems to bind ATP. The chain is DNA replication and repair protein RecF from Enterobacter sp. (strain 638).